The primary structure comprises 145 residues: MIIDITEIMDLIPHRYPFLLVDRVLEIDLNKSIKGIKNVTVNEPQFTGHFPARPVMPGVLMVEAMAQLAAILVAKSLGSTKNKEVFLMAIENAKFRRIVQPGDTMYIHATIDQQRANVWKFSSTVTVEGEMAAESKFTAMIKDKS.

The active site involves H49.

It belongs to the thioester dehydratase family. FabZ subfamily.

It is found in the cytoplasm. The catalysed reaction is a (3R)-hydroxyacyl-[ACP] = a (2E)-enoyl-[ACP] + H2O. Involved in unsaturated fatty acids biosynthesis. Catalyzes the dehydration of short chain beta-hydroxyacyl-ACPs and long chain saturated and unsaturated beta-hydroxyacyl-ACPs. The sequence is that of 3-hydroxyacyl-[acyl-carrier-protein] dehydratase FabZ from Rickettsia felis (strain ATCC VR-1525 / URRWXCal2) (Rickettsia azadi).